The following is a 539-amino-acid chain: Chaperonin GroEL 1 (539 aa).

ATP contacts are provided by residues 29-32 (TLGP), 86-90 (DGTTT), Gly413, 478-480 (NAA), and Asp494.

The protein belongs to the chaperonin (HSP60) family. In terms of assembly, forms a cylinder of 14 subunits composed of two heptameric rings stacked back-to-back. Interacts with the co-chaperonin GroES.

The protein resides in the cytoplasm. It catalyses the reaction ATP + H2O + a folded polypeptide = ADP + phosphate + an unfolded polypeptide.. Functionally, together with its co-chaperonin GroES, plays an essential role in assisting protein folding. The GroEL-GroES system forms a nano-cage that allows encapsulation of the non-native substrate proteins and provides a physical environment optimized to promote and accelerate protein folding. In Corynebacterium diphtheriae (strain ATCC 700971 / NCTC 13129 / Biotype gravis), this protein is Chaperonin GroEL 1.